The chain runs to 377 residues: Putative zinc metalloprotease Atu1380 (377 aa).

A Zn(2+)-binding site is contributed by His-29. Glu-30 is a catalytic residue. His-33 provides a ligand contact to Zn(2+). Transmembrane regions (helical) follow at residues 118–140 (VAAG…FGIY), 299–321 (LGIS…LNLM), and 351–373 (VAFR…NDIS). The 74-residue stretch at 129-202 (AILIFAVLFG…TPITVTVERA (74 aa)) folds into the PDZ domain.

This sequence belongs to the peptidase M50B family. It depends on Zn(2+) as a cofactor.

Its subcellular location is the cell inner membrane. This Agrobacterium fabrum (strain C58 / ATCC 33970) (Agrobacterium tumefaciens (strain C58)) protein is Putative zinc metalloprotease Atu1380.